The sequence spans 507 residues: ATP synthase subunit alpha, chloroplastic (507 aa).

170-177 (GDRQTGKT) serves as a coordination point for ATP.

The protein belongs to the ATPase alpha/beta chains family. In terms of assembly, F-type ATPases have 2 components, CF(1) - the catalytic core - and CF(0) - the membrane proton channel. CF(1) has five subunits: alpha(3), beta(3), gamma(1), delta(1), epsilon(1). CF(0) has four main subunits: a, b, b' and c.

The protein resides in the plastid. It localises to the chloroplast thylakoid membrane. The catalysed reaction is ATP + H2O + 4 H(+)(in) = ADP + phosphate + 5 H(+)(out). Its function is as follows. Produces ATP from ADP in the presence of a proton gradient across the membrane. The alpha chain is a regulatory subunit. The sequence is that of ATP synthase subunit alpha, chloroplastic from Nandina domestica (Heavenly bamboo).